A 447-amino-acid chain; its full sequence is Trigger factor (447 aa).

A PPIase FKBP-type domain is found at 159–244 (GDMLLMQVES…VREIKEEKLP (86 aa)).

This sequence belongs to the FKBP-type PPIase family. Tig subfamily.

It localises to the cytoplasm. It carries out the reaction [protein]-peptidylproline (omega=180) = [protein]-peptidylproline (omega=0). Involved in protein export. Acts as a chaperone by maintaining the newly synthesized protein in an open conformation. Functions as a peptidyl-prolyl cis-trans isomerase. In Dehalococcoides mccartyi (strain CBDB1), this protein is Trigger factor.